Consider the following 95-residue polypeptide: uncharacterized protein (95 aa).

This is an uncharacterized protein from Bacillus anthracis.